Reading from the N-terminus, the 258-residue chain is 1-(5-phosphoribosyl)-5-[(5-phosphoribosylamino)methylideneamino] imidazole-4-carboxamide isomerase 2 (258 aa).

The active-site Proton acceptor is D14. D140 (proton donor) is an active-site residue.

It belongs to the HisA/HisF family.

Its subcellular location is the cytoplasm. It carries out the reaction 1-(5-phospho-beta-D-ribosyl)-5-[(5-phospho-beta-D-ribosylamino)methylideneamino]imidazole-4-carboxamide = 5-[(5-phospho-1-deoxy-D-ribulos-1-ylimino)methylamino]-1-(5-phospho-beta-D-ribosyl)imidazole-4-carboxamide. Its pathway is amino-acid biosynthesis; L-histidine biosynthesis; L-histidine from 5-phospho-alpha-D-ribose 1-diphosphate: step 4/9. In Photorhabdus laumondii subsp. laumondii (strain DSM 15139 / CIP 105565 / TT01) (Photorhabdus luminescens subsp. laumondii), this protein is 1-(5-phosphoribosyl)-5-[(5-phosphoribosylamino)methylideneamino] imidazole-4-carboxamide isomerase 2 (hisA2).